We begin with the raw amino-acid sequence, 117 residues long: Ribonuclease P protein component (117 aa).

It belongs to the RnpA family. As to quaternary structure, consists of a catalytic RNA component (M1 or rnpB) and a protein subunit.

It carries out the reaction Endonucleolytic cleavage of RNA, removing 5'-extranucleotides from tRNA precursor.. Its function is as follows. RNaseP catalyzes the removal of the 5'-leader sequence from pre-tRNA to produce the mature 5'-terminus. It can also cleave other RNA substrates such as 4.5S RNA. The protein component plays an auxiliary but essential role in vivo by binding to the 5'-leader sequence and broadening the substrate specificity of the ribozyme. The polypeptide is Ribonuclease P protein component (Staphylococcus aureus (strain bovine RF122 / ET3-1)).